Here is a 320-residue protein sequence, read N- to C-terminus: Carbonic anhydrase 6 (320 aa).

Residues 1–17 form the signal peptide; sequence MRALALLLALPLLGARA. An Alpha-carbonic anhydrase domain is found at 21-278; it reads SLWTYSEGAL…LNGRVVESNF (258 aa). A disulfide bridge connects residues C42 and C224. H85 serves as the catalytic Proton donor/acceptor. Zn(2+) contacts are provided by H111, H113, and H138. Residue 220 to 221 participates in substrate binding; sequence TT. Residue N256 is glycosylated (N-linked (GlcNAc...) asparagine).

It belongs to the alpha-carbonic anhydrase family. Zn(2+) serves as cofactor.

It localises to the secreted. It catalyses the reaction hydrogencarbonate + H(+) = CO2 + H2O. Reversible hydration of carbon dioxide. Its role in saliva is unknown. This Canis lupus familiaris (Dog) protein is Carbonic anhydrase 6 (CA6).